A 982-amino-acid chain; its full sequence is ATP-dependent DNA helicase Q5 (982 aa).

The Helicase ATP-binding domain maps to 39 to 213 (MAVVKGAEDV…FAALHLKQPV (175 aa)). 52–59 (MPTGAGKS) is an ATP binding site. The short motif at 157 to 160 (DEAH) is the DEAH box element. Residues 241 to 398 (NLRDFCLKAL…NKPSDKATLL (158 aa)) form the Helicase C-terminal domain. Zn(2+) contacts are provided by Cys412, Cys428, Cys432, and Cys435. Residues Ser489 and Ser492 each carry the phosphoserine modification. Residues 491–621 (GSGDEGRDEA…ASKDGQLYDM (131 aa)) form an interaction with POLR2A region. Thr527 carries the phosphothreonine modification. Residues 653-726 (PKRVGAGFSK…ALGSSVNCGD (74 aa)) are interaction with RAD51. Disordered stretches follow at residues 675–797 (GKSH…PGKC) and 812–893 (QTEG…AQEP). Ser728 carries the post-translational modification Phosphoserine; by CDK1.

Belongs to the helicase family. RecQ subfamily. Monomer. Interacts with TOP2A, TOP3A and TOP3B. Interacts with RNA polymerase II subunit POLR2A. Identified in a complex with the RNA polymerase II core bound to DNA. Interacts with RAD51. Interacts with WRN; this interaction stimulates WRN helicase activity on DNA fork duplexes. Interacts with MUS1; this interaction promotes MUS81-dependent mitotic DNA synthesis. The cofactor is Zn(2+). Post-translationally, phosphorylated by CDK1 at Ser-728; this phosphorylation is required for RECQL5-mediated disruption of RAD51 filaments on stalled replication forks.

It is found in the nucleus. The protein localises to the nucleoplasm. The catalysed reaction is Couples ATP hydrolysis with the unwinding of duplex DNA by translocating in the 3'-5' direction.. It carries out the reaction ATP + H2O = ADP + phosphate + H(+). Functionally, DNA helicase that plays an important role in DNA replication, transcription and repair. Binds to the RNA polymerase II subunit POLR2A during transcription elongation and suppresses transcription-associated genomic instability. Also associates with POLR1A and enforces the stability of ribosomal DNA arrays. Plays an important role in mitotic chromosome separation after cross-over events and cell cycle progress. Mechanistically, removes RAD51 filaments protecting stalled replication forks at common fragile sites and stimulates MUS81-EME1 endonuclease leading to mitotic DNA synthesis. Required for efficient DNA repair, including repair of inter-strand cross-links. Stimulates DNA decatenation mediated by TOP2A. Prevents sister chromatid exchange and homologous recombination. This chain is ATP-dependent DNA helicase Q5 (Recql5), found in Mus musculus (Mouse).